The following is a 190-amino-acid chain: dCTP deaminase (190 aa).

113 to 118 (KSTYAR) provides a ligand contact to dCTP. E139 functions as the Proton donor/acceptor in the catalytic mechanism. DCTP is bound by residues Q158, Y172, K181, and Q182.

The protein belongs to the dCTP deaminase family. Homotrimer.

The enzyme catalyses dCTP + H2O + H(+) = dUTP + NH4(+). The protein operates within pyrimidine metabolism; dUMP biosynthesis; dUMP from dCTP (dUTP route): step 1/2. Its function is as follows. Catalyzes the deamination of dCTP to dUTP. The protein is dCTP deaminase of Chlamydia pneumoniae (Chlamydophila pneumoniae).